A 376-amino-acid polypeptide reads, in one-letter code: MKDVPGFLQQSQSAGPGQAAVWHRLEELYNKKLWHQLTLQVLDFVQDPCFAQGDGLIKLYENFISEFEHRVNPLSLVEIILHVVRQMTDPTVALTFLEKTREKVKSSDEAVILCKTAIGALKLNIGDLQVTKETIEEVEEMLNNLPGVTSVHSRFYDLSSKYYQTIGNHASYYKDALRFLGCIDVKDLPVSEQQERAFTLGLAGLLGEGVYNFGELLMHPVLESLRSTDRQWLIDTLYAFNSGNVETFQALKSAWGQQPDLAANEALLLQKIQLLCLMEMTFTRPANHRQLTFEEIAKSAKVTVNEVELLVMKALSVGLVKGSIDEVDKRVHMTWVQPRVLDLQQIKGMKDRLEFWCTDVRSMEMLVEHQAHDILT.

A PCI domain is found at 171–338 (SYYKDALRFL…KRVHMTWVQP (168 aa)).

In terms of assembly, component of the 19S proteasome regulatory particle complex. The 26S proteasome consists of a 20S core particle (CP) and two 19S regulatory subunits (RP). The regulatory particle is made of a lid composed of 9 subunits including PSMD13, a base containing 6 ATPases and few additional components.

Component of the 26S proteasome, a multiprotein complex involved in the ATP-dependent degradation of ubiquitinated proteins. This complex plays a key role in the maintenance of protein homeostasis by removing misfolded or damaged proteins, which could impair cellular functions, and by removing proteins whose functions are no longer required. Therefore, the proteasome participates in numerous cellular processes, including cell cycle progression, apoptosis, or DNA damage repair. In Gallus gallus (Chicken), this protein is 26S proteasome non-ATPase regulatory subunit 13.